The following is a 30-amino-acid chain: Toxic protein AapA1 (30 aa).

The protein belongs to the AapA toxin family.

It is found in the cell inner membrane. Transcription of the aapA1 gene generates a full-length transcript whose folding impedes translation. Processing of the 3' end of the aapA1 message generates a shorter transcript that becomes translatable after a structural rearrangement. The processing also makes it more susceptible to forming dsRNA with IsoA1 which leads to duplex RNA degradation by RNase 3 (rnc). Functionally, may be involved in response to oxidative stress. Toxic component of a type I toxin-antitoxin (TA) system. When overexpression is induced in situ in the absence of its cognate antisense RNA antitoxin IsoA1 it leads to cell growth arrest and cell death without lysis. Neutralized by IsoA1 RNA which forms an extensive duplex with the mRNA. Binds artificial prokaryotic and eukaryotic lipid membranes, with 30-fold higher affinity for prokaryotic membranes. Molecular dynamics suggests the peptide penetrates the membrane leading to lipid reorganization and thinning of the bilayer. Induction of toxin in the absence of antitoxin RNA causes a fast conversion of cells from spiral-shaped to coccoid forms; cells have no visible membrane defects and resemble wild-type 'aging coccoids'. Toxin causes a moderate decrease in membrane potential and ATP content and alterations in peptidoglycan muropeptide abundance; GlcNAc-MurNAc dipeptides increase while GlcNAc-MurNAc tripeptides decrease (i.e. a faster phenocopy of cell aging). Deletion of all 6 AapA/IsoA TA loci in strain B128 leads to slower than wild-type conversion of H2O2-treated cells to the coccoid form. This suggests oxidative stress triggers coccoid transformation via these type I TA systems, although other factors eventually drive the morphology change. The chain is Toxic protein AapA1 from Helicobacter pylori (strain ATCC 700392 / 26695) (Campylobacter pylori).